Here is a 479-residue protein sequence, read N- to C-terminus: uncharacterized protein (479 aa).

Helical transmembrane passes span 11 to 31 (ILMA…LSLI), 43 to 63 (IVGL…AIAV), 90 to 110 (GTTW…ITGL), 151 to 171 (SGGI…SDPE), 195 to 215 (IFLT…PILG), 223 to 243 (WFLA…LICY), 274 to 294 (KALS…NSLH), 295 to 315 (INAT…SIVT), 328 to 348 (TLVW…SGFF), and 447 to 467 (WWIT…TIGM).

Belongs to the SLC13A/DASS transporter (TC 2.A.47) family. DIT1 subfamily.

It is found in the cell inner membrane. This is an uncharacterized protein from Haemophilus influenzae (strain ATCC 51907 / DSM 11121 / KW20 / Rd).